We begin with the raw amino-acid sequence, 902 residues long: Protein translocase subunit SecA (902 aa).

ATP-binding positions include Gln87, 105-109, and Asp512; that span reads GEGKT. The segment at 836–902 is disordered; that stretch reads DVEKVEEQHR…KFKQCCGKLK (67 aa). Residues 840–863 are compositionally biased toward basic and acidic residues; it reads VEEQHRKSENAPREYQHEEVEHVG. Residues Cys886, Cys888, Cys897, and Cys898 each contribute to the Zn(2+) site.

Belongs to the SecA family. Monomer and homodimer. Part of the essential Sec protein translocation apparatus which comprises SecA, SecYEG and auxiliary proteins SecDF-YajC and YidC. Zn(2+) is required as a cofactor.

The protein resides in the cell inner membrane. It localises to the cytoplasm. It carries out the reaction ATP + H2O + cellular proteinSide 1 = ADP + phosphate + cellular proteinSide 2.. Its function is as follows. Part of the Sec protein translocase complex. Interacts with the SecYEG preprotein conducting channel. Has a central role in coupling the hydrolysis of ATP to the transfer of proteins into and across the cell membrane, serving both as a receptor for the preprotein-SecB complex and as an ATP-driven molecular motor driving the stepwise translocation of polypeptide chains across the membrane. This is Protein translocase subunit SecA from Pseudoalteromonas translucida (strain TAC 125).